A 270-amino-acid chain; its full sequence is Formamidopyrimidine-DNA glycosylase (270 aa).

The active-site Schiff-base intermediate with DNA is the proline 2. Glutamate 3 (proton donor) is an active-site residue. Lysine 58 functions as the Proton donor; for beta-elimination activity in the catalytic mechanism. 3 residues coordinate DNA: histidine 91, arginine 110, and arginine 151. Residues phenylalanine 236–arginine 270 form an FPG-type zinc finger. Catalysis depends on arginine 260, which acts as the Proton donor; for delta-elimination activity.

Belongs to the FPG family. Monomer. Zn(2+) is required as a cofactor.

It catalyses the reaction Hydrolysis of DNA containing ring-opened 7-methylguanine residues, releasing 2,6-diamino-4-hydroxy-5-(N-methyl)formamidopyrimidine.. It carries out the reaction 2'-deoxyribonucleotide-(2'-deoxyribose 5'-phosphate)-2'-deoxyribonucleotide-DNA = a 3'-end 2'-deoxyribonucleotide-(2,3-dehydro-2,3-deoxyribose 5'-phosphate)-DNA + a 5'-end 5'-phospho-2'-deoxyribonucleoside-DNA + H(+). Involved in base excision repair of DNA damaged by oxidation or by mutagenic agents. Acts as a DNA glycosylase that recognizes and removes damaged bases. Has a preference for oxidized purines, such as 7,8-dihydro-8-oxoguanine (8-oxoG). Has AP (apurinic/apyrimidinic) lyase activity and introduces nicks in the DNA strand. Cleaves the DNA backbone by beta-delta elimination to generate a single-strand break at the site of the removed base with both 3'- and 5'-phosphates. The sequence is that of Formamidopyrimidine-DNA glycosylase from Stutzerimonas stutzeri (strain A1501) (Pseudomonas stutzeri).